Here is a 431-residue protein sequence, read N- to C-terminus: Trigger factor (431 aa).

Residues 165–250 (GDTVVIDFDG…IHELKRKELP (86 aa)) enclose the PPIase FKBP-type domain.

The protein belongs to the FKBP-type PPIase family. Tig subfamily.

The protein localises to the cytoplasm. It carries out the reaction [protein]-peptidylproline (omega=180) = [protein]-peptidylproline (omega=0). Functionally, involved in protein export. Acts as a chaperone by maintaining the newly synthesized protein in an open conformation. Functions as a peptidyl-prolyl cis-trans isomerase. The chain is Trigger factor from Leuconostoc citreum (strain KM20).